The following is a 223-amino-acid chain: Cytotoxic T-lymphocyte protein 4 (223 aa).

An N-terminal signal peptide occupies residues 1–35 (MACSGFQSHGAWLELTSRTWPCTALFSLLFIPVFS). Over 38-161 (MHVAQPAVVL…IDPEPCPDSD (124 aa)) the chain is Extracellular. An Ig-like V-type domain is found at 39–140 (HVAQPAVVLA…VELLYPPPYY (102 aa)). The tract at residues 46–50 (VLANS) is homodimerization. Cystine bridges form between Cys-58-Cys-129 and Cys-85-Cys-103. Asn-113 is a glycosylation site (N-linked (GlcNAc...) asparagine). The tract at residues 134–139 (LYPPPY) is important for interaction with CD80 and CD86. The N-linked (GlcNAc...) asparagine glycan is linked to Asn-145. The homodimerization stretch occupies residues 150–155 (YVIDPE). The chain crosses the membrane as a helical span at residues 162 to 182 (FLLWILAAVSSGLFFYSFLIT). The Cytoplasmic portion of the chain corresponds to 183–223 (AVSLSKMLKKRSPLTTGVYVKMPPTEPECEKQFQPYFIPIN). Tyr-201 bears the Phosphotyrosine; by TXK and JAK2 mark.

Homodimer; disulfide-linked. Binds to CD80/B7-1 and CD86/B7.2. Interacts with ICOSLG. In terms of processing, N-glycosylation is important for dimerization. Post-translationally, phosphorylation at Tyr-201 prevents binding to the AP-2 adapter complex, blocks endocytosis, and leads to retention of CTLA4 on the cell surface.

It is found in the cell membrane. Its function is as follows. Inhibitory receptor acting as a major negative regulator of T-cell responses. The affinity of CTLA4 for its natural B7 family ligands, CD80 and CD86, is considerably stronger than the affinity of their cognate stimulatory coreceptor CD28. In Sus scrofa (Pig), this protein is Cytotoxic T-lymphocyte protein 4 (CTLA4).